A 177-amino-acid chain; its full sequence is Adenine phosphoribosyltransferase (177 aa).

Belongs to the purine/pyrimidine phosphoribosyltransferase family. As to quaternary structure, homodimer.

The protein localises to the cytoplasm. It carries out the reaction AMP + diphosphate = 5-phospho-alpha-D-ribose 1-diphosphate + adenine. Its pathway is purine metabolism; AMP biosynthesis via salvage pathway; AMP from adenine: step 1/1. In terms of biological role, catalyzes a salvage reaction resulting in the formation of AMP, that is energically less costly than de novo synthesis. The chain is Adenine phosphoribosyltransferase from Mycobacteroides abscessus (strain ATCC 19977 / DSM 44196 / CCUG 20993 / CIP 104536 / JCM 13569 / NCTC 13031 / TMC 1543 / L948) (Mycobacterium abscessus).